The chain runs to 394 residues: Phosphopentomutase (394 aa).

Mn(2+) is bound by residues Asp-14, Asp-287, His-292, Asp-328, His-329, and His-340.

It belongs to the phosphopentomutase family. Requires Mn(2+) as cofactor.

Its subcellular location is the cytoplasm. It carries out the reaction 2-deoxy-alpha-D-ribose 1-phosphate = 2-deoxy-D-ribose 5-phosphate. The enzyme catalyses alpha-D-ribose 1-phosphate = D-ribose 5-phosphate. It functions in the pathway carbohydrate degradation; 2-deoxy-D-ribose 1-phosphate degradation; D-glyceraldehyde 3-phosphate and acetaldehyde from 2-deoxy-alpha-D-ribose 1-phosphate: step 1/2. Isomerase that catalyzes the conversion of deoxy-ribose 1-phosphate (dRib-1-P) and ribose 1-phosphate (Rib-1-P) to deoxy-ribose 5-phosphate (dRib-5-P) and ribose 5-phosphate (Rib-5-P), respectively. The polypeptide is Phosphopentomutase (Shouchella clausii (strain KSM-K16) (Alkalihalobacillus clausii)).